A 385-amino-acid chain; its full sequence is Glucans biosynthesis protein C (385 aa).

10 consecutive transmembrane segments (helical) span residues 17 to 37, 60 to 80, 91 to 111, 137 to 157, 173 to 193, 212 to 232, 239 to 259, 274 to 294, 311 to 331, and 338 to 358; these read AWLMLLGIPFHISLIYSSHTW, MQVFFVISGYFSYMLFLRYPL, VGIPMLTAIPLLTLPQFIMLQ, ISHLWFLLVLVVMTTLCVWIF, KFSMVKLSVIFLCLGIGYAVI, FIVMQTLFYLPFFILGALAFI, LFTTPSRGCTFAAALAFVAYL, TESVITMVLGLWMVNVVFSFG, ASLFIYLVHHPLTLFFGAYIT, and WLGFLCGLIFVVGIAIILYEI.

This sequence belongs to the acyltransferase 3 family. OpgC subfamily.

The protein resides in the cell membrane. Its pathway is glycan metabolism; osmoregulated periplasmic glucan (OPG) biosynthesis. Its function is as follows. Necessary for the succinyl substitution of periplasmic glucans. Could catalyze the transfer of succinyl residues from the cytoplasmic side of the membrane to the nascent glucan backbones on the periplasmic side of the membrane. This is Glucans biosynthesis protein C from Escherichia coli O45:K1 (strain S88 / ExPEC).